Reading from the N-terminus, the 62-residue chain is Potassium channel toxin gamma-KTx 1.1 (62 aa).

The first 20 residues, methionine 1 to methionine 20, serve as a signal peptide directing secretion. 4 cysteine pairs are disulfide-bonded: cysteine 25-cysteine 43, cysteine 31-cysteine 54, cysteine 40-cysteine 59, and cysteine 44-cysteine 61.

This sequence belongs to the ergtoxin family. Gamma-KTx 1 subfamily. After protein storage at -20 Celsius degrees during a couple of months, the Met-55 of a small number of toxins is naturally oxidized. This oxidized form is about three orders of magnitude less efficient (IC(50)=15 uM) than non-oxidized form. As to expression, expressed by the venom gland.

The protein resides in the secreted. Blocks human and rat Kv11.1/KCNH2/ERG1 and Kv11.3/KCNH7/ERG3, as well as rat (but not human) Kv11.2/KCNH6/ERG2 by binding to channel outer vestibule (S5P domain) with a 1:1 stoichiometry. Inhibition data are the following: hERG1 (reversible, IC(50)~7 nM), rERG1 (reversible, Kd=6.8 nM), rERG2 (irreversible, Kd=2.8 nM), hERG3 (irreversible, Kd=4.05 nM) and rERG3 (reversible, Kd=38.1 nM) potassium channels. The toxin potency is not affected by elevating potassium ion concentration from 2 to 98 mM. This toxin only blocks channels in a closed state. At high toxin concentrations, block of Kv11.1/KCNH2/ERG1 macroscopic current is incomplete (93.5%). This suggests a kinetic mechanism model with two different states of toxin-channel binding (T+C=TC*=TC; in the TC* state, the toxin binds the channel but does not occlude the pore, whereas in the TC state the toxin binds and occludes the pore). In this model, incomplete block is explained by the relatively fast dissociation rate from the blocked channel conformation (TC) relative to the rate of conversion of the toxin-channel encounter complex (TC*) to the blocked channel conformation (TC). This Centruroides noxius (Mexican scorpion) protein is Potassium channel toxin gamma-KTx 1.1.